A 165-amino-acid chain; its full sequence is Endoribonuclease YbeY (165 aa).

Zn(2+)-binding residues include His-119, His-123, and His-129.

It belongs to the endoribonuclease YbeY family. Zn(2+) serves as cofactor.

The protein resides in the cytoplasm. Its function is as follows. Single strand-specific metallo-endoribonuclease involved in late-stage 70S ribosome quality control and in maturation of the 3' terminus of the 16S rRNA. The chain is Endoribonuclease YbeY from Streptomyces griseus subsp. griseus (strain JCM 4626 / CBS 651.72 / NBRC 13350 / KCC S-0626 / ISP 5235).